A 417-amino-acid polypeptide reads, in one-letter code: Imidazolonepropionase (417 aa).

Residues H77 and H79 each coordinate Fe(3+). Residues H77 and H79 each coordinate Zn(2+). 4-imidazolone-5-propanoate-binding residues include R86, Y149, and H182. Y149 is an N-formimidoyl-L-glutamate binding site. H247 provides a ligand contact to Fe(3+). Zn(2+) is bound at residue H247. Residue Q250 participates in 4-imidazolone-5-propanoate binding. Fe(3+) is bound at residue D322. D322 lines the Zn(2+) pocket. N-formimidoyl-L-glutamate is bound by residues N324 and G326. T327 is a binding site for 4-imidazolone-5-propanoate.

Belongs to the metallo-dependent hydrolases superfamily. HutI family. It depends on Zn(2+) as a cofactor. Requires Fe(3+) as cofactor.

It is found in the cytoplasm. It carries out the reaction 4-imidazolone-5-propanoate + H2O = N-formimidoyl-L-glutamate. It functions in the pathway amino-acid degradation; L-histidine degradation into L-glutamate; N-formimidoyl-L-glutamate from L-histidine: step 3/3. Catalyzes the hydrolytic cleavage of the carbon-nitrogen bond in imidazolone-5-propanoate to yield N-formimidoyl-L-glutamate. It is the third step in the universal histidine degradation pathway. The polypeptide is Imidazolonepropionase (Cupriavidus necator (strain ATCC 17699 / DSM 428 / KCTC 22496 / NCIMB 10442 / H16 / Stanier 337) (Ralstonia eutropha)).